A 172-amino-acid polypeptide reads, in one-letter code: Macro domain-containing protein CT2219 (172 aa).

A Macro domain is found at 1–172; that stretch reads MPDNVLIHAI…DVYQKALAAG (172 aa).

The protein belongs to the MacroD-type family.

The protein is Macro domain-containing protein CT2219 of Chlorobaculum tepidum (strain ATCC 49652 / DSM 12025 / NBRC 103806 / TLS) (Chlorobium tepidum).